A 419-amino-acid polypeptide reads, in one-letter code: MGEEKPEPLDFVKDFQEYLSQQTQHVNMISGSVIGVKDSDDLQGELAQNGLEHPAVDMSLEDSSGMLVDGFERTYDGKLKCRYCNYATRGTARLIEHIRIHTGEKPHRCHLCPFASAYERHLEAHMRSHTGEKPYKCELCSFRCSDRSNLSHHRRRRHKLLPMKGARSALSHRKMLSVLQKRGNSLGYGRRLLINLSPPSMVLQKPSSEQHHLGDFTHDLPPHAHLHQEAYNGLGKDPQAIGGAIGSGSREDQDMALDNPLNQLSTLAGQLASIPSEAEGAPVSPGAESLPDEKPTFLVQQPVTAPAAVSVNTAQASSPITPEPRPAAHSGCSPGVGPCSERTSTPSGTNSQPGTPTPVQDPQMLHHCPHCHIYFPDNILYTIHMGCHGYENPFQCNICGHRCRNSYDFACHFARGQHK.

3 consecutive C2H2-type zinc fingers follow at residues 79–101 (LKCRYCNYATRGTARLIEHIRIH), 107–129 (HRCHLCPFASAYERHLEAHMRSH), and 135–158 (YKCELCSFRCSDRSNLSHHRRRRH). Disordered stretches follow at residues 203–255 (LQKP…DQDM) and 310–360 (SVNT…TPVQ). The span at 208–228 (SEQHHLGDFTHDLPPHAHLHQ) shows a compositional bias: basic and acidic residues. Composition is skewed to polar residues over residues 310–320 (SVNTAQASSPI) and 341–360 (ERTSTPSGTNSQPGTPTPVQ). 2 consecutive C2H2-type zinc fingers follow at residues 366–388 (HHCPHCHIYFPDNILYTIHMGCH) and 394–418 (FQCNICGHRCRNSYDFACHFARGQH).

It belongs to the Ikaros C2H2-type zinc-finger protein family. As to quaternary structure, probably self-associates.

The protein localises to the nucleus. Its function is as follows. Transcriptional repressor that binds the core 5'GNNTGTNG-3' DNA consensus sequence. The protein is Zinc finger protein Pegasus (ikzf5) of Danio rerio (Zebrafish).